Here is a 288-residue protein sequence, read N- to C-terminus: Protease HtpX homolog (288 aa).

Transmembrane regions (helical) follow at residues 6–26 and 28–48; these read TAFLMVALMLVFIAVGGYVGG and QGMMIAFLMAAGMNIFSYFFS. Histidine 130 lines the Zn(2+) pocket. The active site involves glutamate 131. Histidine 134 lines the Zn(2+) pocket. Transmembrane regions (helical) follow at residues 140–160 and 179–199; these read ILTGSVAAILAGAIAMVANFA and VIMLIIAVVMPLAATVIQMAI. Glutamate 204 is a Zn(2+) binding site.

It belongs to the peptidase M48B family. Zn(2+) serves as cofactor.

Its subcellular location is the cell inner membrane. This chain is Protease HtpX homolog, found in Campylobacter concisus (strain 13826).